Consider the following 302-residue polypeptide: Protein FdhE homolog (302 aa).

Belongs to the FdhE family.

It is found in the cytoplasm. Functionally, necessary for formate dehydrogenase activity. This chain is Protein FdhE homolog, found in Haemophilus influenzae (strain PittEE).